We begin with the raw amino-acid sequence, 348 residues long: Short-chain dehydrogenase fogG (348 aa).

Residues Leu-51, Arg-75, Asp-100, and Asn-126 each coordinate NADP(+). Catalysis depends on proton donor residues Ser-180 and Tyr-215. The NADP(+) site is built by Tyr-215 and Lys-219. Catalysis depends on Lys-219, which acts as the Lowers pKa of active site Tyr.

The protein belongs to the short-chain dehydrogenases/reductases (SDR) family.

Its pathway is secondary metabolite biosynthesis. Its function is as follows. Short-chain dehydrogenase; part of the gene cluster that mediates the biosynthesis of flavoglaucin and congeners (including aspergin, dihydroauroglaucin and auroglaucin), prenylated salicylaldehyde derivatives carrying a saturated or an unsaturated C-7 side chain. The PKS fogA releases the carboxylic acid (8E,10E,12E)-3,5,7-trihydroxytetradeca-8,10,12-trienoic acid as its product, as well as derivatives with one and two double bonds. FogA is indeed able to reduce the initial triketide, thus being at least partially responsible for the differently saturated heptyl side chains of flavoglaucin congeners. The oxidoreductases fogB, fogC and fogD modify the nascent polyketide in fogA-bound form and, together, fogA, fogB, fogC and fogD are necessary for the formation of the aromatic core and the cyclized PKS products are released as salicyl alcohols. In particular, fogB is responsible for oxidation of a hydroxyl group or reduction of remaining double bond(s) at the C-7 residue whereas fogD is probably involved in the reductive release of the modified PKS products. The cytochrome P450 monooxygenase fogE is then responsible for the hydroxylation at C-3 of the benzene ring. The fogE products are substrates of the prenyltransferase fogH and the prenylated benzyl alcohols are subsequently oxidized by the fogF to produce the final aryl aldehydes flavoglaucin and congeners. The short-chain dehydrogenase fogG does not seem to be involved in the biosynthesis of the prenylated salicylaldehyde derivatives. The sequence is that of Short-chain dehydrogenase fogG from Aspergillus ruber (strain CBS 135680).